Here is a 215-residue protein sequence, read N- to C-terminus: Ras-related protein Rab-14 (215 aa).

At alanine 2 the chain carries N-acetylalanine. GTP contacts are provided by glycine 21, valine 22, glycine 23, lysine 24, serine 25, cysteine 26, alanine 38, aspartate 39, cysteine 40, histidine 42, and threonine 43. Position 25 (serine 25) interacts with Mg(2+). The Switch 1 signature appears at 42–47; the sequence is HTIGVE. Mg(2+) is bound by residues threonine 43 and aspartate 66. A Switch 2 motif is present at residues 68-77; it reads AGQERFRAVT. GTP contacts are provided by glycine 69, asparagine 124, lysine 125, aspartate 127, alanine 155, and lysine 156. A disordered region spans residues 188 to 215; the sequence is SGVQHKPSAPQGGRLTSEPQPQREGCGC. Residues cysteine 213 and cysteine 215 are each lipidated (S-geranylgeranyl cysteine). Cysteine 215 is subject to Cysteine methyl ester.

Belongs to the small GTPase superfamily. Rab family. Mg(2+) serves as cofactor.

Its subcellular location is the recycling endosome. The protein localises to the early endosome membrane. It localises to the golgi apparatus membrane. It is found in the golgi apparatus. The protein resides in the trans-Golgi network membrane. Its subcellular location is the cytoplasmic vesicle. The protein localises to the phagosome. The catalysed reaction is GTP + H2O = GDP + phosphate + H(+). With respect to regulation, regulated by guanine nucleotide exchange factors (GEFs) including DENND6A and DENND6B which promote the exchange of bound GDP for free GTP. Regulated by GTPase activating proteins (GAPs) which increase the GTP hydrolysis activity. Inhibited by GDP dissociation inhibitors (GDIs) which prevent Rab-GDP dissociation. Its function is as follows. The small GTPases Rab are key regulators of intracellular membrane trafficking, from the formation of transport vesicles to their fusion with membranes. Rabs cycle between an inactive GDP-bound form and an active GTP-bound form that is able to recruit to membranes different set of downstream effectors directly responsible for vesicle formation, movement, tethering and fusion. Involved in membrane trafficking between the Golgi complex and endosomes during early embryonic development. Regulates the Golgi to endosome transport of FGFR-containing vesicles during early development, a key process for developing basement membrane and epiblast and primitive endoderm lineages during early postimplantation development. May act by modulating the kinesin KIF16B-cargo association to endosomes. Regulates, together with its guanine nucleotide exchange factor DENND6A, the specific endocytic transport of ADAM10, N-cadherin/CDH2 shedding and cell-cell adhesion. Mediates endosomal tethering and fusion through the interaction with RUFY1 and RAB4B. Interaction with RAB11FIP1 may function in the process of neurite formation. This chain is Ras-related protein Rab-14 (RAB14), found in Gallus gallus (Chicken).